We begin with the raw amino-acid sequence, 213 residues long: Outer-membrane lipoprotein carrier protein (213 aa).

The first 18 residues, 1–18 (MKYFATICIAAYAGLAGA), serve as a signal peptide directing secretion.

This sequence belongs to the LolA family. Monomer.

The protein localises to the periplasm. Its function is as follows. Participates in the translocation of lipoproteins from the inner membrane to the outer membrane. Only forms a complex with a lipoprotein if the residue after the N-terminal Cys is not an aspartate (The Asp acts as a targeting signal to indicate that the lipoprotein should stay in the inner membrane). The sequence is that of Outer-membrane lipoprotein carrier protein from Albidiferax ferrireducens (strain ATCC BAA-621 / DSM 15236 / T118) (Rhodoferax ferrireducens).